Here is a 158-residue protein sequence, read N- to C-terminus: Cyclic pyranopterin monophosphate synthase (158 aa).

Substrate-binding positions include 74-76 (MCH) and 112-113 (ME). The active site involves Asp-127.

The protein belongs to the MoaC family. Homohexamer; trimer of dimers.

The catalysed reaction is (8S)-3',8-cyclo-7,8-dihydroguanosine 5'-triphosphate = cyclic pyranopterin phosphate + diphosphate. It participates in cofactor biosynthesis; molybdopterin biosynthesis. Its function is as follows. Catalyzes the conversion of (8S)-3',8-cyclo-7,8-dihydroguanosine 5'-triphosphate to cyclic pyranopterin monophosphate (cPMP). The sequence is that of Cyclic pyranopterin monophosphate synthase from Helicobacter pylori (strain J99 / ATCC 700824) (Campylobacter pylori J99).